A 184-amino-acid chain; its full sequence is Elongation factor P (184 aa).

The protein belongs to the elongation factor P family.

Its subcellular location is the cytoplasm. It participates in protein biosynthesis; polypeptide chain elongation. Its function is as follows. Involved in peptide bond synthesis. Stimulates efficient translation and peptide-bond synthesis on native or reconstituted 70S ribosomes in vitro. Probably functions indirectly by altering the affinity of the ribosome for aminoacyl-tRNA, thus increasing their reactivity as acceptors for peptidyl transferase. This Delftia acidovorans (strain DSM 14801 / SPH-1) protein is Elongation factor P.